Here is a 212-residue protein sequence, read N- to C-terminus: Mediator of RNA polymerase II transcription subunit 20 (212 aa).

It belongs to the Mediator complex subunit 20 family. As to quaternary structure, component of the Mediator complex, which is composed of MED1, MED4, MED6, MED7, MED8, MED9, MED10, MED11, MED12, MED13, MED13L, MED14, MED15, MED16, MED17, MED18, MED19, MED20, MED21, MED22, MED23, MED24, MED25, MED26, MED27, MED29, MED30, MED31, CCNC, CDK8 and CDC2L6/CDK11. The MED12, MED13, CCNC and CDK8 subunits form a distinct module termed the CDK8 module. Mediator containing the CDK8 module is less active than Mediator lacking this module in supporting transcriptional activation. Individual preparations of the Mediator complex lacking one or more distinct subunits have been variously termed ARC, CRSP, DRIP, PC2, SMCC and TRAP. Interacts with PPARG.

The protein resides in the nucleus. Component of the Mediator complex, a coactivator involved in the regulated transcription of nearly all RNA polymerase II-dependent genes. Mediator functions as a bridge to convey information from gene-specific regulatory proteins to the basal RNA polymerase II transcription machinery. Mediator is recruited to promoters by direct interactions with regulatory proteins and serves as a scaffold for the assembly of a functional preinitiation complex with RNA polymerase II and the general transcription factors. The sequence is that of Mediator of RNA polymerase II transcription subunit 20 (Med20) from Mus musculus (Mouse).